A 424-amino-acid polypeptide reads, in one-letter code: Lipoamide acyltransferase component of branched-chain alpha-keto acid dehydrogenase complex (424 aa).

The Lipoyl-binding domain occupies 3 to 78 (IEQMTMPQLG…QVGEMICKIE (76 aa)). Lys-44 is modified (N6-lipoyllysine). The disordered stretch occupies residues 82–115 (ANPAEQKQEQPAASEAAENPVAKSAGAADQPNKK). One can recognise a Peripheral subunit-binding (PSBD) domain in the interval 116–153 (RYSPAVLRLAGEHGIDLDQVTGTGAGGRITRKDIQRLI). Residues 154–193 (ETGGVQEQNPEELKTAAPAPKSASKPEPKEETSYPASAAG) are disordered. Catalysis depends on residues His-395 and Asp-399.

The protein belongs to the 2-oxoacid dehydrogenase family. In terms of assembly, forms a 24-polypeptide structural core with octahedral symmetry. (R)-lipoate serves as cofactor.

It carries out the reaction N(6)-[(R)-dihydrolipoyl]-L-lysyl-[protein] + 2-methylpropanoyl-CoA = N(6)-[(R)-S(8)-2-methylpropanoyldihydrolipoyl]-L-lysyl-[protein] + CoA. Its function is as follows. The branched-chain alpha-keto dehydrogenase complex catalyzes the overall conversion of alpha-keto acids to acyl-CoA and CO(2). It contains multiple copies of three enzymatic components: branched-chain alpha-keto acid decarboxylase (E1), lipoamide acyltransferase (E2) and lipoamide dehydrogenase (E3). The chain is Lipoamide acyltransferase component of branched-chain alpha-keto acid dehydrogenase complex (bfmBB) from Bacillus subtilis (strain 168).